The sequence spans 141 residues: Large ribosomal subunit protein uL11 (141 aa).

A disordered region spans residues 1 to 23 (MAKQVTGQAKFQVPGGQATPAPP).

This sequence belongs to the universal ribosomal protein uL11 family. As to quaternary structure, part of the ribosomal stalk of the 50S ribosomal subunit. Interacts with L10 and the large rRNA to form the base of the stalk. L10 forms an elongated spine to which L12 dimers bind in a sequential fashion forming a multimeric L10(L12)X complex. Post-translationally, one or more lysine residues are methylated.

Forms part of the ribosomal stalk which helps the ribosome interact with GTP-bound translation factors. This Rhodopirellula baltica (strain DSM 10527 / NCIMB 13988 / SH1) protein is Large ribosomal subunit protein uL11.